The following is a 326-amino-acid chain: Vitamin B12 import system permease protein BtuC (326 aa).

The next 9 membrane-spanning stretches (helical) occupy residues 15–35, 61–81, 88–108, 112–132, 146–166, 184–204, 240–260, 274–294, and 302–322; these read WLLS…CAGE, LAVL…QALF, PGLL…VLLG, LPGW…TLIL, LLAG…AIYF, GGVD…LIWI, GWMV…GLVI, VLLP…DVVA, and ELPI…WLLL.

Belongs to the binding-protein-dependent transport system permease family. FecCD subfamily. As to quaternary structure, the complex is composed of two ATP-binding proteins (BtuD), two transmembrane proteins (BtuC) and a solute-binding protein (BtuF).

Its subcellular location is the cell inner membrane. Part of the ABC transporter complex BtuCDF involved in vitamin B12 import. Involved in the translocation of the substrate across the membrane. This chain is Vitamin B12 import system permease protein BtuC, found in Salmonella agona (strain SL483).